The following is a 345-amino-acid chain: Protein CHROMOSOME TRANSMISSION FIDELITY 7 (345 aa).

Residues 96-120 (RHCAECGAKYAPGDELDEKNHQSFH) form a CCHH-type zinc finger.

The protein belongs to the acetyltransferase family. ECO subfamily. Autoacetylated. Expressed in roots, stems, leaves, young seedlings and flower buds. Detected in the embryo, but not in the endosperm.

It is found in the nucleus. Its subcellular location is the cytoplasm. Acetyltransferase required for the establishment of sister chromatid cohesion. Involved in preservation of genome integrity and meiosis. Required for DNA repair and for the regulation of chromosome segregation during mitotic cell division. Knock-down mutants are extremely dwarf. Regulator of sister chromatid cohesion in meiosis which negatively regulates cohesin association with chromatin, acting as an antagonist of WAPL1 and WAPL2. This chain is Protein CHROMOSOME TRANSMISSION FIDELITY 7, found in Arabidopsis thaliana (Mouse-ear cress).